The sequence spans 117 residues: Large ribosomal subunit protein bL19 (117 aa).

The protein belongs to the bacterial ribosomal protein bL19 family.

Its function is as follows. This protein is located at the 30S-50S ribosomal subunit interface and may play a role in the structure and function of the aminoacyl-tRNA binding site. The protein is Large ribosomal subunit protein bL19 of Bacteroides fragilis (strain ATCC 25285 / DSM 2151 / CCUG 4856 / JCM 11019 / LMG 10263 / NCTC 9343 / Onslow / VPI 2553 / EN-2).